The following is a 317-amino-acid chain: UV DNA damage endonuclease (317 aa).

Belongs to the uve1/UvsE family.

In terms of biological role, component in a DNA repair pathway. Removal of UV LIGHT damaged nucleotides. Recognizes pyrimidine dimers and cleave a phosphodiester bond immediately 5' to the lesion. The polypeptide is UV DNA damage endonuclease (Bacillus cereus (strain 03BB102)).